The following is a 408-amino-acid chain: CinA-like protein (408 aa).

This sequence belongs to the CinA family.

The sequence is that of CinA-like protein from Thermotoga maritima (strain ATCC 43589 / DSM 3109 / JCM 10099 / NBRC 100826 / MSB8).